The primary structure comprises 238 residues: tRNA (guanine-N(7)-)-methyltransferase (238 aa).

4 residues coordinate S-adenosyl-L-methionine: Glu-68, Glu-93, Asp-120, and Asp-143. The active site involves Asp-143. Residues Lys-147, Asp-179, and 216–219 (TKFE) each bind substrate.

The protein belongs to the class I-like SAM-binding methyltransferase superfamily. TrmB family.

The catalysed reaction is guanosine(46) in tRNA + S-adenosyl-L-methionine = N(7)-methylguanosine(46) in tRNA + S-adenosyl-L-homocysteine. Its pathway is tRNA modification; N(7)-methylguanine-tRNA biosynthesis. Its function is as follows. Catalyzes the formation of N(7)-methylguanine at position 46 (m7G46) in tRNA. The chain is tRNA (guanine-N(7)-)-methyltransferase from Shewanella baltica (strain OS195).